We begin with the raw amino-acid sequence, 740 residues long: Catalase-peroxidase (740 aa).

The signal sequence occupies residues 1-27; it reads MFKSTLPIAAAISVALTSMVLPAKALA. The tryptophyl-tyrosyl-methioninium (Trp-Tyr) (with M-254) cross-link spans 106 to 228; that stretch reads WHSAGVYRVH…LAAVEMGLIY (123 aa). His107 acts as the Proton acceptor in catalysis. The segment at residues 228–254 is a cross-link (tryptophyl-tyrosyl-methioninium (Tyr-Met) (with W-106)); it reads YVNPEGPHGKPDPLLAANDIRMSFGRM. His269 lines the heme b pocket.

Belongs to the peroxidase family. Peroxidase/catalase subfamily. As to quaternary structure, homodimer or homotetramer. Heme b is required as a cofactor. Formation of the three residue Trp-Tyr-Met cross-link is important for the catalase, but not the peroxidase activity of the enzyme.

It catalyses the reaction H2O2 + AH2 = A + 2 H2O. The catalysed reaction is 2 H2O2 = O2 + 2 H2O. Its function is as follows. Bifunctional enzyme with both catalase and broad-spectrum peroxidase activity. The sequence is that of Catalase-peroxidase from Colwellia psychrerythraea (strain 34H / ATCC BAA-681) (Vibrio psychroerythus).